A 362-amino-acid polypeptide reads, in one-letter code: Heat-inducible transcription repressor HrcA (362 aa).

This sequence belongs to the HrcA family.

Negative regulator of class I heat shock genes (grpE-dnaK-dnaJ and groELS operons). Prevents heat-shock induction of these operons. In Bradyrhizobium sp. (strain ORS 278), this protein is Heat-inducible transcription repressor HrcA.